Reading from the N-terminus, the 248-residue chain is Probable transcriptional regulatory protein SO_2432 (248 aa).

The protein belongs to the TACO1 family.

Its subcellular location is the cytoplasm. The polypeptide is Probable transcriptional regulatory protein SO_2432 (Shewanella oneidensis (strain ATCC 700550 / JCM 31522 / CIP 106686 / LMG 19005 / NCIMB 14063 / MR-1)).